Reading from the N-terminus, the 186-residue chain is Glutathione S-transferase 1, isoform A (186 aa).

Residues 1–81 (MDFYYLPGSA…YLVEKYCAHD (81 aa)) enclose the GST N-terminal domain. Glutathione is bound by residues S9, 50–52 (HCI), and 65–67 (ESR). Residues 92–186 (DPRRRAVVHQ…RRCRVRSAAI (95 aa)) enclose the GST C-terminal domain.

The protein belongs to the GST superfamily. Theta family. Homodimer.

It carries out the reaction RX + glutathione = an S-substituted glutathione + a halide anion + H(+). Conjugation of reduced glutathione to a wide number of exogenous and endogenous hydrophobic electrophiles. The chain is Glutathione S-transferase 1, isoform A from Anopheles gambiae (African malaria mosquito).